A 390-amino-acid chain; its full sequence is Probable tRNA pseudouridine synthase D (390 aa).

D93 functions as the Nucleophile in the catalytic mechanism. In terms of domain architecture, TRUD spans H166–P353.

The protein belongs to the pseudouridine synthase TruD family.

It carries out the reaction uridine(13) in tRNA = pseudouridine(13) in tRNA. In terms of biological role, could be responsible for synthesis of pseudouridine from uracil-13 in transfer RNAs. The protein is Probable tRNA pseudouridine synthase D of Methanococcus vannielii (strain ATCC 35089 / DSM 1224 / JCM 13029 / OCM 148 / SB).